A 583-amino-acid polypeptide reads, in one-letter code: 2-succinyl-5-enolpyruvyl-6-hydroxy-3-cyclohexene-1-carboxylate synthase (583 aa).

This sequence belongs to the TPP enzyme family. MenD subfamily. In terms of assembly, homodimer. It depends on Mg(2+) as a cofactor. Mn(2+) is required as a cofactor. The cofactor is thiamine diphosphate.

The enzyme catalyses isochorismate + 2-oxoglutarate + H(+) = 5-enolpyruvoyl-6-hydroxy-2-succinyl-cyclohex-3-ene-1-carboxylate + CO2. It functions in the pathway quinol/quinone metabolism; 1,4-dihydroxy-2-naphthoate biosynthesis; 1,4-dihydroxy-2-naphthoate from chorismate: step 2/7. The protein operates within quinol/quinone metabolism; menaquinone biosynthesis. Catalyzes the thiamine diphosphate-dependent decarboxylation of 2-oxoglutarate and the subsequent addition of the resulting succinic semialdehyde-thiamine pyrophosphate anion to isochorismate to yield 2-succinyl-5-enolpyruvyl-6-hydroxy-3-cyclohexene-1-carboxylate (SEPHCHC). In Chlorobium luteolum (strain DSM 273 / BCRC 81028 / 2530) (Pelodictyon luteolum), this protein is 2-succinyl-5-enolpyruvyl-6-hydroxy-3-cyclohexene-1-carboxylate synthase.